The primary structure comprises 216 residues: Ras-related protein RABA1c (216 aa).

Position 20–27 (20–27) interacts with GTP; that stretch reads GDSGVGKS. Positions 42–50 match the Effector region motif; it reads SKSTIGVEF. Residues 68-72, 126-129, and 156-157 each bind GTP; these read DTAGQ, NKSD, and SA. Residues cysteine 213 and cysteine 214 are each lipidated (S-geranylgeranyl cysteine).

This sequence belongs to the small GTPase superfamily. Rab family.

It localises to the cell membrane. Its function is as follows. Intracellular vesicle trafficking and protein transport. This Arabidopsis thaliana (Mouse-ear cress) protein is Ras-related protein RABA1c (RABA1C).